The sequence spans 654 residues: Threonine--tRNA ligase (654 aa).

In terms of domain architecture, TGS spans 1–63 (MASINVKFPD…TTDGSIEIIA (63 aa)). Positions 248 to 546 (DHRVIGNELD…LTEIYKGAFP (299 aa)) are catalytic. Zn(2+) contacts are provided by Cys342, His393, and His523.

It belongs to the class-II aminoacyl-tRNA synthetase family. In terms of assembly, homodimer. Zn(2+) is required as a cofactor.

It is found in the cytoplasm. It catalyses the reaction tRNA(Thr) + L-threonine + ATP = L-threonyl-tRNA(Thr) + AMP + diphosphate + H(+). Its function is as follows. Catalyzes the attachment of threonine to tRNA(Thr) in a two-step reaction: L-threonine is first activated by ATP to form Thr-AMP and then transferred to the acceptor end of tRNA(Thr). Also edits incorrectly charged L-seryl-tRNA(Thr). In Lactiplantibacillus plantarum (strain ATCC BAA-793 / NCIMB 8826 / WCFS1) (Lactobacillus plantarum), this protein is Threonine--tRNA ligase.